A 283-amino-acid polypeptide reads, in one-letter code: Diaminopimelate epimerase (283 aa).

Substrate-binding residues include Asn13 and Asn65. The active-site Proton donor is the Cys74. Residues Gly75 to Asn76, Asn196, and Glu214 to Arg215 contribute to the substrate site. Residue Cys223 is the Proton acceptor of the active site. Residue Gly224 to Thr225 coordinates substrate.

The protein belongs to the diaminopimelate epimerase family. In terms of assembly, homodimer.

It is found in the cytoplasm. The enzyme catalyses (2S,6S)-2,6-diaminopimelate = meso-2,6-diaminopimelate. It participates in amino-acid biosynthesis; L-lysine biosynthesis via DAP pathway; DL-2,6-diaminopimelate from LL-2,6-diaminopimelate: step 1/1. In terms of biological role, catalyzes the stereoinversion of LL-2,6-diaminopimelate (L,L-DAP) to meso-diaminopimelate (meso-DAP), a precursor of L-lysine and an essential component of the bacterial peptidoglycan. The sequence is that of Diaminopimelate epimerase from Alkaliphilus metalliredigens (strain QYMF).